A 121-amino-acid polypeptide reads, in one-letter code: Putative iron-sulfur cluster insertion protein ErpA (121 aa).

The iron-sulfur cluster site is built by Cys-49, Cys-113, and Cys-115.

Belongs to the HesB/IscA family. In terms of assembly, homodimer. Iron-sulfur cluster serves as cofactor.

Its function is as follows. Required for insertion of 4Fe-4S clusters. This is Putative iron-sulfur cluster insertion protein ErpA from Verminephrobacter eiseniae (strain EF01-2).